A 270-amino-acid chain; its full sequence is Cyclohexanol dehydrogenase (270 aa).

Positions 19, 40, 78, 79, 105, 176, 180, 209, and 211 each coordinate NAD(+). Tyr-176 acts as the Proton acceptor in catalysis.

It belongs to the short-chain dehydrogenases/reductases (SDR) family. As to quaternary structure, homodimer.

It localises to the cytoplasm. It catalyses the reaction cyclohexanol + NAD(+) = cyclohexanone + NADH + H(+). With respect to regulation, activity is enhanced by the addition of Ba(2+) and Mg(2+), but inhibited by the addition of Al(3+), Ca(2+), Co(2+), Cu(2+), Mn(2+) and Zn(2+). Catalyzes the oxidation of cyclohexanol to cyclohexanone. Can also use a broad range of other alcohols, including trans-cyclohexane-1,2-diol, trans-cyclopentane-1,2-diol, cyclopentanol, hexane-1,2-diol, ethanol, 1-propanol, 1-butanol, 1-pentanol and 1-hexanol. In Rhodococcus sp. (strain TK6), this protein is Cyclohexanol dehydrogenase.